Here is a 596-residue protein sequence, read N- to C-terminus: Inactive metallocarboxypeptidase ECM14 (596 aa).

Positions methionine 1–alanine 22 are cleaved as a signal peptide. The propeptide occupies valine 23–alanine 184. The tract at residues proline 182–histidine 211 is disordered. A compositionally biased stretch (polar residues) spans alanine 187–lysine 207. The Peptidase M14 domain maps to aspartate 220–leucine 546. The Zn(2+) site is built by histidine 285 and glutamate 288. Substrate-binding positions include histidine 285–glutamate 288, arginine 343, and aspartate 360–histidine 361. Cysteine 354 and cysteine 377 are joined by a disulfide. The N-linked (GlcNAc...) asparagine glycan is linked to asparagine 370. Residue histidine 417 coordinates Zn(2+). Serine 418–tyrosine 419 is a substrate binding site. Residues aspartate 557–serine 596 form a disordered region. Positions glutamate 564–aspartate 580 are enriched in acidic residues. Positions glycine 583–serine 596 are enriched in polar residues.

It belongs to the peptidase M14 family. Requires Zn(2+) as cofactor.

The protein localises to the vacuole. The protein resides in the secreted. Its function is as follows. Inactive carboxypeptidase that may play a role in cell wall organization and biogenesis. This chain is Inactive metallocarboxypeptidase ECM14 (ECM14), found in Arthroderma benhamiae (strain ATCC MYA-4681 / CBS 112371) (Trichophyton mentagrophytes).